We begin with the raw amino-acid sequence, 756 residues long: Glutathione biosynthesis bifunctional protein GshAB (756 aa).

The tract at residues 1–338 (MNYRELMQKK…TGDIFNEQVA (338 aa)) is glutamate--cysteine ligase. In terms of domain architecture, ATP-grasp spans 493 to 751 (KKILSAAGFH…LTMDVLKLLY (259 aa)). 520–578 (LRYANKAFVVKPKSTNYGLGITIFKEGASLEDFTEALRIAFKEDTAVLIEEFLPGTEYR) provides a ligand contact to ATP. Mg(2+) contacts are provided by aspartate 700, glutamate 721, and asparagine 723. 3 residues coordinate Mn(2+): aspartate 700, glutamate 721, and asparagine 723.

In the N-terminal section; belongs to the glutamate--cysteine ligase type 1 family. Type 2 subfamily. As to quaternary structure, monomer. Mg(2+) is required as a cofactor. It depends on Mn(2+) as a cofactor.

It catalyses the reaction L-cysteine + L-glutamate + ATP = gamma-L-glutamyl-L-cysteine + ADP + phosphate + H(+). The enzyme catalyses gamma-L-glutamyl-L-cysteine + glycine + ATP = glutathione + ADP + phosphate + H(+). The protein operates within sulfur metabolism; glutathione biosynthesis; glutathione from L-cysteine and L-glutamate: step 1/2. It functions in the pathway sulfur metabolism; glutathione biosynthesis; glutathione from L-cysteine and L-glutamate: step 2/2. Functionally, synthesizes glutathione from L-glutamate and L-cysteine via gamma-L-glutamyl-L-cysteine. The chain is Glutathione biosynthesis bifunctional protein GshAB from Enterococcus faecalis (strain ATCC 700802 / V583).